Reading from the N-terminus, the 240-residue chain is Small ribosomal subunit protein uS3 (240 aa).

In terms of domain architecture, KH type-2 spans 21–92 (LNEFFTRELA…TIVLYAERVQ (72 aa)). Thr-44 and Thr-70 each carry phosphothreonine. Ser-97 carries the phosphoserine modification. A Glycyl lysine isopeptide (Lys-Gly) (interchain with G-Cter in ubiquitin) cross-link involves residue Lys-106. A Phosphoserine modification is found at Ser-129. Residues Lys-132 and Lys-141 each participate in a glycyl lysine isopeptide (Lys-Gly) (interchain with G-Cter in ubiquitin) cross-link. Arg-146 bears the Omega-N-methylarginine; by SFM1 mark. Glycyl lysine isopeptide (Lys-Gly) (interchain with G-Cter in ubiquitin) cross-links involve residues Lys-151, Lys-200, and Lys-212. A disordered region spans residues 212–240 (KEEEPILAPSVKDYRPAEETEAQAEPVEA). Phosphoserine is present on Ser-221. The segment covering 230–240 (ETEAQAEPVEA) has biased composition (acidic residues). Thr-231 is subject to Phosphothreonine.

It belongs to the universal ribosomal protein uS3 family. Component of the small ribosomal subunit (SSU). Mature yeast ribosomes consist of a small (40S) and a large (60S) subunit. The 40S small subunit contains 1 molecule of ribosomal RNA (18S rRNA) and 33 different proteins (encoded by 57 genes). The large 60S subunit contains 3 rRNA molecules (25S, 5.8S and 5S rRNA) and 46 different proteins (encoded by 81 genes). In terms of processing, ubiquitinated at Lys-212 in response to stalled ribosomes. Ubiquitination leads to activation of the No-Go Decay (NGD) pathway and degradation of non-functional 18S rRNA: first monoubiquitinated at Lys-212 by MAG2, followed by formation of 'Lys-63'-linked polyubiquitin chains on monoubiquitin by HEL2 and RSP5.

It localises to the cytoplasm. Component of the ribosome, a large ribonucleoprotein complex responsible for the synthesis of proteins in the cell. The small ribosomal subunit (SSU) binds messenger RNAs (mRNAs) and translates the encoded message by selecting cognate aminoacyl-transfer RNA (tRNA) molecules. The large subunit (LSU) contains the ribosomal catalytic site termed the peptidyl transferase center (PTC), which catalyzes the formation of peptide bonds, thereby polymerizing the amino acids delivered by tRNAs into a polypeptide chain. The nascent polypeptides leave the ribosome through a tunnel in the LSU and interact with protein factors that function in enzymatic processing, targeting, and the membrane insertion of nascent chains at the exit of the ribosomal tunnel. The chain is Small ribosomal subunit protein uS3 from Saccharomyces cerevisiae (strain ATCC 204508 / S288c) (Baker's yeast).